Here is an 84-residue protein sequence, read N- to C-terminus: Small ribosomal subunit protein bS18 (84 aa).

The protein belongs to the bacterial ribosomal protein bS18 family. In terms of assembly, part of the 30S ribosomal subunit. Forms a tight heterodimer with protein bS6.

Functionally, binds as a heterodimer with protein bS6 to the central domain of the 16S rRNA, where it helps stabilize the platform of the 30S subunit. This is Small ribosomal subunit protein bS18 from Ruthia magnifica subsp. Calyptogena magnifica.